We begin with the raw amino-acid sequence, 391 residues long: UDP-galactose transporter homolog 1 (391 aa).

5 helical membrane-spanning segments follow: residues 3-23 (LLQL…WGLL), 52-72 (LFLN…YLLV), 126-147 (YILI…LRYI), 178-198 (YKYA…AFAP), and 207-227 (APES…VLDG). Asn-230 carries an N-linked (GlcNAc...) asparagine glycan. Helical transmembrane passes span 250 to 270 (MMLV…TLPI), 298 to 318 (DIIA…ETLE), 323 to 343 (LTLV…SVVV), and 347 to 367 (ELSK…GIEA).

Belongs to the nucleotide-sugar transporter family. SLC35B subfamily.

It localises to the endoplasmic reticulum membrane. Its function is as follows. May be involved in specific transport of UDP-Gal from the cytosol to the Golgi lumen. Involved in the maintenance of optimal conditions for the folding of secretory pathway proteins in the endoplasmic reticulum. This is UDP-galactose transporter homolog 1 (HUT1) from Mycosarcoma maydis (Corn smut fungus).